A 456-amino-acid polypeptide reads, in one-letter code: Bifunctional protein GlmU (456 aa).

The segment at 1-229 (MLNNAMSVVI…LSEVEGVNNR (229 aa)) is pyrophosphorylase. UDP-N-acetyl-alpha-D-glucosamine is bound by residues 11–14 (LAAG), Lys-25, Gln-76, 81–82 (GT), 103–105 (YGD), Gly-140, Glu-154, Asn-169, and Asn-227. Position 105 (Asp-105) interacts with Mg(2+). Residue Asn-227 participates in Mg(2+) binding. The linker stretch occupies residues 230-250 (LQLSRLERVYQSEQAEKLLLA). The interval 251–456 (GVMLRDPARF…EGWRRPVKKK (206 aa)) is N-acetyltransferase. Residues Arg-333 and Lys-351 each contribute to the UDP-N-acetyl-alpha-D-glucosamine site. Residue His-363 is the Proton acceptor of the active site. UDP-N-acetyl-alpha-D-glucosamine is bound by residues Tyr-366 and Asn-377. Acetyl-CoA-binding positions include Ala-380, 386-387 (NY), Ser-405, Ala-423, and Arg-440.

This sequence in the N-terminal section; belongs to the N-acetylglucosamine-1-phosphate uridyltransferase family. The protein in the C-terminal section; belongs to the transferase hexapeptide repeat family. As to quaternary structure, homotrimer. It depends on Mg(2+) as a cofactor.

It is found in the cytoplasm. The enzyme catalyses alpha-D-glucosamine 1-phosphate + acetyl-CoA = N-acetyl-alpha-D-glucosamine 1-phosphate + CoA + H(+). It catalyses the reaction N-acetyl-alpha-D-glucosamine 1-phosphate + UTP + H(+) = UDP-N-acetyl-alpha-D-glucosamine + diphosphate. It functions in the pathway nucleotide-sugar biosynthesis; UDP-N-acetyl-alpha-D-glucosamine biosynthesis; N-acetyl-alpha-D-glucosamine 1-phosphate from alpha-D-glucosamine 6-phosphate (route II): step 2/2. The protein operates within nucleotide-sugar biosynthesis; UDP-N-acetyl-alpha-D-glucosamine biosynthesis; UDP-N-acetyl-alpha-D-glucosamine from N-acetyl-alpha-D-glucosamine 1-phosphate: step 1/1. It participates in bacterial outer membrane biogenesis; LPS lipid A biosynthesis. Its function is as follows. Catalyzes the last two sequential reactions in the de novo biosynthetic pathway for UDP-N-acetylglucosamine (UDP-GlcNAc). The C-terminal domain catalyzes the transfer of acetyl group from acetyl coenzyme A to glucosamine-1-phosphate (GlcN-1-P) to produce N-acetylglucosamine-1-phosphate (GlcNAc-1-P), which is converted into UDP-GlcNAc by the transfer of uridine 5-monophosphate (from uridine 5-triphosphate), a reaction catalyzed by the N-terminal domain. This chain is Bifunctional protein GlmU, found in Escherichia coli O139:H28 (strain E24377A / ETEC).